A 473-amino-acid polypeptide reads, in one-letter code: Putative sulfoquinovose importer (473 aa).

A run of 11 helical transmembrane segments spans residues 18 to 38 (AYGV…LYLL), 45 to 65 (LGMP…FTAF), 88 to 108 (PFIL…FFAT), 110 to 130 (FTLP…GLFY), 160 to 180 (GGAT…QALF), 187 to 207 (GYLI…WWCF), 239 to 259 (LLVL…KLAI), 276 to 296 (WMGF…PAAV), 317 to 337 (ILNF…CIAF), 380 to 400 (ISAA…GYIP), and 415 to 435 (LIFL…GFFY).

The protein belongs to the sodium:galactoside symporter (TC 2.A.2) family.

The protein localises to the cell inner membrane. Functionally, could be involved in sulfoquinovose import. The chain is Putative sulfoquinovose importer (yihO) from Salmonella typhimurium (strain LT2 / SGSC1412 / ATCC 700720).